The chain runs to 661 residues: Galactan 5-O-arabinofuranosyltransferase (661 aa).

13 helical membrane passes run 26–46, 64–84, 108–128, 194–214, 217–237, 243–263, 265–285, 286–306, 312–332, 362–382, 393–413, 418–438, and 458–478; these read LVAI…LWMG, VASA…WLWL, ALTY…VLAI, AFQP…VPVW, ITGS…IILA, PYAA…SRIA, GDKF…TFYT, LFTG…AAIV, PLLW…ISWG, VPFL…IYLV, MWVG…ITLL, LGFR…VLGI, and TATH…LYYA.

Belongs to the glycosyltransferase 85 family.

It localises to the cell membrane. It catalyses the reaction Adds an alpha-D-arabinofuranosyl group from trans,octacis-decaprenylphospho-beta-D-arabinofuranose at the 5-O-position of the eighth, tenth and twelfth galactofuranose unit of the galactofuranan chain of [beta-D-galactofuranosyl-(1-&gt;5)-beta-D-galactofuranosyl-(1-&gt;6)]14-beta-D-galactofuranosyl-(1-&gt;5)-beta-D-galactofuranosyl-(1-&gt;4)-alpha-L-rhamnopyranosyl-(1-&gt;3)-N-acetyl-alpha-D-glucosaminyl-diphospho-trans,octacis-decaprenol.. The protein operates within cell wall biogenesis; cell wall polysaccharide biosynthesis. In terms of biological role, involved in the biosynthesis of the arabinogalactan (AG) region of the mycolylarabinogalactan-peptidoglycan (mAGP) complex, an essential component of the cell wall. Catalyzes the addition of the first key arabinofuranosyl (Araf) residue from the sugar donor decaprenyl-phospho-arabinose (DPA) on the C-5 of a 6-linked galactofuranosyl (Galf) of the galactan domain, thus 'priming' the galactan for further elaboration by other arabinofuranosyltransferases. This is Galactan 5-O-arabinofuranosyltransferase from Corynebacterium glutamicum (strain ATCC 13032 / DSM 20300 / JCM 1318 / BCRC 11384 / CCUG 27702 / LMG 3730 / NBRC 12168 / NCIMB 10025 / NRRL B-2784 / 534).